The primary structure comprises 460 residues: Ufm1-specific protease 2 (460 aa).

Residues Cys-293, Asp-417, and His-419 contribute to the active site.

Belongs to the peptidase C78 family.

It localises to the endoplasmic reticulum. It is found in the cytoplasm. Its subcellular location is the nucleus. Thiol-dependent isopeptidase that specifically cleaves UFM1, a ubiquitin-like modifier protein, from conjugated proteins. While it is also able to mediate the processing of UFM1 precursors, a prerequisite for conjugation reactions, UFSP2 mainly acts as a protein deUFMylase that mediates deconjugation of UFM1 from target proteins. The sequence is that of Ufm1-specific protease 2 from Gallus gallus (Chicken).